Consider the following 140-residue polypeptide: Large ribosomal subunit protein uL11 (140 aa).

This sequence belongs to the universal ribosomal protein uL11 family. In terms of assembly, part of the ribosomal stalk of the 50S ribosomal subunit. Interacts with L10 and the large rRNA to form the base of the stalk. L10 forms an elongated spine to which L12 dimers bind in a sequential fashion forming a multimeric L10(L12)X complex. In terms of processing, one or more lysine residues are methylated.

In terms of biological role, forms part of the ribosomal stalk which helps the ribosome interact with GTP-bound translation factors. This Halothermothrix orenii (strain H 168 / OCM 544 / DSM 9562) protein is Large ribosomal subunit protein uL11.